The following is a 308-amino-acid chain: Taste receptor type 2 member 46 (308 aa).

A topological domain (extracellular) is located at residue methionine 1. A helical transmembrane segment spans residues 2-22 (ITFLSITFSILVGVIFVIGNF). The Cytoplasmic portion of the chain corresponds to 23–46 (ANGFIALVNSIEWVKRQKISFADQ). A helical membrane pass occupies residues 47–67 (ILTGLAVSRVGLLWVLLLHLY). Topologically, residues 68-86 (ATEFNLAFYSVEVRITAYN) are extracellular. Residues 87–107 (VWIVTNHFSNWLSTSLSMFYL) traverse the membrane as a helical segment. The Cytoplasmic portion of the chain corresponds to 108 to 126 (LKIATFSNLIFLHLKRKVK). A helical transmembrane segment spans residues 127–147 (SVILVTLLGPLLFLVCHLFVM). The Extracellular segment spans residues 148-178 (NMNHIVWRKEYEGNITWRIKLRSAMYLSNVT). Asparagine 161 and asparagine 176 each carry an N-linked (GlcNAc...) asparagine glycan. A helical membrane pass occupies residues 179-199 (VTMLANLIPLTLTLMSFLLLI). At 200 to 229 (CSLCKHLKKMQVHGKGSQDPSTKVHIKALQ) the chain is on the cytoplasmic side. Residues 230-250 (TVTSFLLLCAIYFLSMILSVW) form a helical membrane-spanning segment. Residues 251-258 (NFELEKKP) lie on the Extracellular side of the membrane. The helical transmembrane segment at 259–279 (VFMFCQAVIFSYPSTHPLILI) threads the bilayer. Residues 280–308 (WGNKKLKQIFLSVLWNVRYWVKGQKPSSP) are Cytoplasmic-facing.

It belongs to the G-protein coupled receptor T2R family.

The protein localises to the membrane. It localises to the cell projection. It is found in the cilium membrane. Functionally, receptor that may play a role in the perception of bitterness and is gustducin-linked. May play a role in sensing the chemical composition of the gastrointestinal content. The activity of this receptor may stimulate alpha gustducin, mediate PLC-beta-2 activation and lead to the gating of TRPM5. In airway epithelial cells, binding of bitter compounds increases the intracellular calcium ion concentration and stimulates ciliary beat frequency. The protein is Taste receptor type 2 member 46 (TAS2R46) of Macaca mulatta (Rhesus macaque).